Reading from the N-terminus, the 474-residue chain is MFVVSEMADFIKAGGLGDVAAALPRALRHRYDVRVLIPGYRAVLERAGKVEIVGRVLAHAALPACDIGRIVQSDGLPIYILLSKELFERDGSPYVSTSGSEFEDNAIRFATLSHAAAQIAAGHAGLGWKPRLLHLNDWPCALAAGYVRWSGGTTPCLLTIHNLAYQGLVPYSMAAALGIPAERVAELEFYGQMSFLRGGIVNADHVNTVSVSYAKQITGPAQGCGLDRLLAGRAAKGALTGIVNGIDASWDPRTDQYLDSHFSVNQWQGRQANAAQVRKAFGLRESAGPLFAVVSRLVHQKGLDLICEVAPQIVAAGGQIAVIGGGEPEIEQQVAELTRRYPGQVGAFIGFEEGLARRMFAGADFLLMPSRFEPCGLSQMYAQRFGCLPIAHATGGLIDTVDDGVTGFLFQHASVEALRRCLERAFRTFRLPSLLSAMRRAAMLRPSGWDVAGKKYLSLYEHTAATAPALATVP.

Position 12 (Lys12) interacts with ADP-alpha-D-glucose.

Belongs to the glycosyltransferase 1 family. Bacterial/plant glycogen synthase subfamily.

It catalyses the reaction [(1-&gt;4)-alpha-D-glucosyl](n) + ADP-alpha-D-glucose = [(1-&gt;4)-alpha-D-glucosyl](n+1) + ADP + H(+). Its pathway is glycan biosynthesis; glycogen biosynthesis. In terms of biological role, synthesizes alpha-1,4-glucan chains using ADP-glucose. The sequence is that of Glycogen synthase from Xanthomonas axonopodis pv. citri (strain 306).